Consider the following 223-residue polypeptide: Cytidylate kinase (223 aa).

G10 to T18 is a binding site for ATP.

The protein belongs to the cytidylate kinase family. Type 1 subfamily.

Its subcellular location is the cytoplasm. The enzyme catalyses CMP + ATP = CDP + ADP. The catalysed reaction is dCMP + ATP = dCDP + ADP. The protein is Cytidylate kinase of Streptococcus pneumoniae serotype 4 (strain ATCC BAA-334 / TIGR4).